Consider the following 527-residue polypeptide: Bifunctional purine biosynthesis protein PurH (527 aa).

An MGS-like domain is found at Ala8 to Val156.

It belongs to the PurH family.

It catalyses the reaction (6R)-10-formyltetrahydrofolate + 5-amino-1-(5-phospho-beta-D-ribosyl)imidazole-4-carboxamide = 5-formamido-1-(5-phospho-D-ribosyl)imidazole-4-carboxamide + (6S)-5,6,7,8-tetrahydrofolate. The catalysed reaction is IMP + H2O = 5-formamido-1-(5-phospho-D-ribosyl)imidazole-4-carboxamide. The protein operates within purine metabolism; IMP biosynthesis via de novo pathway; 5-formamido-1-(5-phospho-D-ribosyl)imidazole-4-carboxamide from 5-amino-1-(5-phospho-D-ribosyl)imidazole-4-carboxamide (10-formyl THF route): step 1/1. Its pathway is purine metabolism; IMP biosynthesis via de novo pathway; IMP from 5-formamido-1-(5-phospho-D-ribosyl)imidazole-4-carboxamide: step 1/1. The polypeptide is Bifunctional purine biosynthesis protein PurH (Mycobacterium sp. (strain KMS)).